The primary structure comprises 439 residues: GTPase Obg (439 aa).

An Obg domain is found at 1–159; it reads MAFVDQAEIE…RKLKLELKVL (159 aa). The OBG-type G domain occupies 160 to 336; the sequence is ADVGLVGFPS…LMRLTADLLA (177 aa). Residues 166–173, 191–195, 213–216, 283–286, and 317–319 each bind GTP; these read GFPSAGKS, FTTLS, DLPG, TKMD, and SAL. 2 residues coordinate Mg(2+): S173 and T193. An OCT domain is found at 358–439; that stretch reads DFKPEQHNFT…NSDFVFEFSD (82 aa).

The protein belongs to the TRAFAC class OBG-HflX-like GTPase superfamily. OBG GTPase family. Monomer. Mg(2+) is required as a cofactor.

The protein resides in the cytoplasm. An essential GTPase which binds GTP, GDP and possibly (p)ppGpp with moderate affinity, with high nucleotide exchange rates and a fairly low GTP hydrolysis rate. Plays a role in control of the cell cycle, stress response, ribosome biogenesis and in those bacteria that undergo differentiation, in morphogenesis control. The polypeptide is GTPase Obg (Leuconostoc citreum (strain KM20)).